Consider the following 347-residue polypeptide: Malate dehydrogenase, mitochondrial (347 aa).

The transit peptide at 1-27 (MRASMLRLIRSRSSSAAPRPHLLRRAY) directs the protein to the mitochondrion. NAD(+) contacts are provided by residues 41–47 (GAAGGIG) and D67. 2 residues coordinate substrate: R114 and R120. NAD(+) is bound by residues N127 and 150 to 152 (ISN). Substrate contacts are provided by N152 and R186. H210 acts as the Proton acceptor in catalysis. M261 provides a ligand contact to NAD(+).

It belongs to the LDH/MDH superfamily. MDH type 1 family. As to quaternary structure, homodimer.

The protein resides in the mitochondrion matrix. It carries out the reaction (S)-malate + NAD(+) = oxaloacetate + NADH + H(+). The protein is Malate dehydrogenase, mitochondrial (MDH) of Eucalyptus gunnii (Cider gum).